Here is a 488-residue protein sequence, read N- to C-terminus: BTB/POZ domain-containing protein 1 (488 aa).

Positions 1–19 (MASLGSAAAGEPATGAEAE) are enriched in low complexity. The interval 1–42 (MASLGSAAAGEPATGAEAEPGPPAPPPPPPPPPAPSPSALGP) is disordered. The span at 20–36 (PGPPAPPPPPPPPPAPS) shows a compositional bias: pro residues. The 77-residue stretch at 75 to 151 (SDVRFVLGKG…LYSDEVQIGP (77 aa)) folds into the BTB domain. The residue at position 85 (R85) is an Omega-N-methylarginine. The region spanning 190-290 (LTQARLFDEP…IRFPLMTIEE (101 aa)) is the BACK domain.

As to quaternary structure, interacts (via C-terminus) with TOP1. Interacts with TRIM5 isoform Delta. Interacts with CUL3. As to expression, strongly expressed in heart and skeletal muscle. Weakly expressed in myoblast C2C12 cells, but strongly up-regulated upon their differentiation into myotubes.

The protein localises to the cytoplasm. It participates in protein modification; protein ubiquitination. Its function is as follows. Probable substrate-specific adapter of an E3 ubiquitin-protein ligase complex which mediates the ubiquitination and subsequent proteasomal degradation of target proteins. Seems to regulate expression levels and/or subnuclear distribution of TOP1, via an unknown mechanism. May play a role in mesenchymal differentiation where it promotes myogenic differentiation and suppresses adipogenesis. The sequence is that of BTB/POZ domain-containing protein 1 (Btbd1) from Mus musculus (Mouse).